The primary structure comprises 560 residues: Zorya protein ZorC (560 aa).

Functionally, component of antiviral defense system Zorya type I, composed of ZorA, ZorB, ZorC and ZorD. Expression of Zorya type I in E.coli (strain MG1655) confers 10,000-fold resistance to phage SECphi27, 100-fold resistance to lambda, and 10-fold resistance to T7. While most T7 infected Zorya-containing cells undergo abortive infection, a minority produce viable phage progeny. These eventually accumulate to a high multiplicity of infection, leading to culture collapse by 2 hours after initial infection. ZorA and ZorB probably assemble in the cell inner membrane and exert their effect there. In Escherichia coli O139:H28 (strain E24377A / ETEC), this protein is Zorya protein ZorC.